Here is a 210-residue protein sequence, read N- to C-terminus: Putative RING-H2 finger protein ATL50 (210 aa).

Residues I35–L55 traverse the membrane as a helical segment. The RING-type; atypical zinc finger occupies C122–R164. The segment at S187–K210 is disordered.

It belongs to the RING-type zinc finger family. ATL subfamily.

The protein resides in the membrane. It carries out the reaction S-ubiquitinyl-[E2 ubiquitin-conjugating enzyme]-L-cysteine + [acceptor protein]-L-lysine = [E2 ubiquitin-conjugating enzyme]-L-cysteine + N(6)-ubiquitinyl-[acceptor protein]-L-lysine.. The protein operates within protein modification; protein ubiquitination. The sequence is that of Putative RING-H2 finger protein ATL50 (ATL50) from Arabidopsis thaliana (Mouse-ear cress).